A 271-amino-acid polypeptide reads, in one-letter code: Formamidopyrimidine-DNA glycosylase (271 aa).

Residue Pro2 is the Schiff-base intermediate with DNA of the active site. Residue Glu3 is the Proton donor of the active site. Lys58 functions as the Proton donor; for beta-elimination activity in the catalytic mechanism. DNA contacts are provided by His92, Arg111, and Arg152. The segment at 237–271 (MVYGREGEACRHCGGELKHATIGQRATVWCAACQR) adopts an FPG-type zinc-finger fold. The active-site Proton donor; for delta-elimination activity is the Arg261.

It belongs to the FPG family. In terms of assembly, monomer. Zn(2+) serves as cofactor.

The enzyme catalyses Hydrolysis of DNA containing ring-opened 7-methylguanine residues, releasing 2,6-diamino-4-hydroxy-5-(N-methyl)formamidopyrimidine.. It catalyses the reaction 2'-deoxyribonucleotide-(2'-deoxyribose 5'-phosphate)-2'-deoxyribonucleotide-DNA = a 3'-end 2'-deoxyribonucleotide-(2,3-dehydro-2,3-deoxyribose 5'-phosphate)-DNA + a 5'-end 5'-phospho-2'-deoxyribonucleoside-DNA + H(+). Its function is as follows. Involved in base excision repair of DNA damaged by oxidation or by mutagenic agents. Acts as a DNA glycosylase that recognizes and removes damaged bases. Has a preference for oxidized purines, such as 7,8-dihydro-8-oxoguanine (8-oxoG). Has AP (apurinic/apyrimidinic) lyase activity and introduces nicks in the DNA strand. Cleaves the DNA backbone by beta-delta elimination to generate a single-strand break at the site of the removed base with both 3'- and 5'-phosphates. The sequence is that of Formamidopyrimidine-DNA glycosylase from Xanthomonas campestris pv. campestris (strain ATCC 33913 / DSM 3586 / NCPPB 528 / LMG 568 / P 25).